The sequence spans 492 residues: N-succinylglutamate 5-semialdehyde dehydrogenase (492 aa).

Position 220–225 (220–225) interacts with NAD(+); that stretch reads GSANTG. Active-site residues include E243 and C277.

Belongs to the aldehyde dehydrogenase family. AstD subfamily.

It carries out the reaction N-succinyl-L-glutamate 5-semialdehyde + NAD(+) + H2O = N-succinyl-L-glutamate + NADH + 2 H(+). The protein operates within amino-acid degradation; L-arginine degradation via AST pathway; L-glutamate and succinate from L-arginine: step 4/5. Catalyzes the NAD-dependent reduction of succinylglutamate semialdehyde into succinylglutamate. In Escherichia coli O127:H6 (strain E2348/69 / EPEC), this protein is N-succinylglutamate 5-semialdehyde dehydrogenase.